A 532-amino-acid chain; its full sequence is Germ cell nuclear acidic-1 protein (532 aa).

Positions 1-10 (MPTPFRDLHN) are enriched in basic and acidic residues. Disordered stretches follow at residues 1–50 (MPTP…EPIS), 84–181 (REAP…GNFE), and 213–253 (YISE…DRKQ). Residues 14 to 32 (ASASSYETAWSSSFSSRRS) are compositionally biased toward low complexity. 3 stretches are compositionally biased toward basic and acidic residues: residues 39–48 (SNLKEIKDEP), 94–107 (LLQKIEKEDERDML), and 124–133 (KPKEVKKALK). Over residues 213 to 235 (YISEESSEEESEEEEEDVDDEEY) the composition is skewed to acidic residues. Residues 236 to 251 (RESSPEVEAKISYSDR) are compositionally biased toward basic and acidic residues. The 91-residue stretch at 308 to 398 (RRIFSAIPSE…GARCSSVFKS (91 aa)) folds into the SprT-like domain. Positions 468–489 (AKPVGPILSNSSKPSPPAPRRI) are disordered.

It belongs to the serine-aspartate repeat-containing protein (SDr) family. Interacts with top-2; this interaction allows the resolution of topoisomerase II (top-2) DNA-protein cross-links. In terms of tissue distribution, mainly expressed in germ cells and early embryonic, proliferating cells.

It localises to the chromosome. Its function is as follows. May play a role in DNA-protein cross-links (DPCs) clearance through a SUMO-dependent recruitment to sites of DPCs, ensuring the genomic stability by protecting germ cells and early embryos from various sources of damage. May resolve the topoisomerase II (top-2) DPCs. Limits replication stress and DNA double-strand breaks. In Caenorhabditis elegans, this protein is Germ cell nuclear acidic-1 protein.